The primary structure comprises 443 residues: Alpha-amylase (443 aa).

Residues 1 to 24 (MHNTLFRTALLAAALGSFSHTASA) form the signal peptide. Histidine 114 and arginine 196 together coordinate substrate. Aspartate 198 (nucleophile) is an active-site residue. 201–202 (KH) serves as a coordination point for substrate. Glutamate 223 serves as the catalytic Proton donor. Substrate-binding residues include glycine 228 and histidine 287.

The protein belongs to the glycosyl hydrolase 13 family.

The protein localises to the secreted. The enzyme catalyses Endohydrolysis of (1-&gt;4)-alpha-D-glucosidic linkages in polysaccharides containing three or more (1-&gt;4)-alpha-linked D-glucose units.. The protein is Alpha-amylase (amyA) of Aeromonas hydrophila.